Here is a 352-residue protein sequence, read N- to C-terminus: Glycerol-1-phosphate dehydrogenase [NAD(P)+] (352 aa).

NAD(+) is bound by residues 91–95 (GRVID) and 113–116 (TVAS). Residue aspartate 118 coordinates substrate. Serine 122 provides a ligand contact to NAD(+). Glutamate 169 is a substrate binding site. Residues glutamate 169 and histidine 249 each coordinate Zn(2+). Histidine 253 provides a ligand contact to substrate. Histidine 269 provides a ligand contact to Zn(2+).

Belongs to the glycerol-1-phosphate dehydrogenase family. As to quaternary structure, homodimer. Requires Zn(2+) as cofactor.

The protein localises to the cytoplasm. It catalyses the reaction sn-glycerol 1-phosphate + NAD(+) = dihydroxyacetone phosphate + NADH + H(+). The catalysed reaction is sn-glycerol 1-phosphate + NADP(+) = dihydroxyacetone phosphate + NADPH + H(+). It participates in membrane lipid metabolism; glycerophospholipid metabolism. Catalyzes the NAD(P)H-dependent reduction of dihydroxyacetonephosphate (DHAP or glycerone phosphate) to glycerol 1-phosphate (G1P). The G1P thus generated is used as the glycerophosphate backbone of phospholipids in the cellular membranes of Archaea. The chain is Glycerol-1-phosphate dehydrogenase [NAD(P)+] from Caldivirga maquilingensis (strain ATCC 700844 / DSM 13496 / JCM 10307 / IC-167).